An 89-amino-acid chain; its full sequence is MAKKSKVAKELKRQQLVEQYAGIRRELKEKGDYEALSKLPRDSAPGRLHNRCMVTGRPRAYMRKFKMSRIAFRELAHKGQIPGVKKASW.

The protein belongs to the universal ribosomal protein uS14 family. Contacts proteins S3 and S10. Part of the 30S ribosomal subunit.

Binds 16S rRNA, required for the assembly of 30S particles and may also be responsible for determining the conformation of the 16S rRNA at the A site. In terms of biological role, non-essential protein. A second form of uS14, it can integrate into the 30S subunit where it partially compensates for loss of the major uS14 protein (AC P12878) in restoring 70S formation, although it does not seem to be incorporated into the ribosome as well as the major uS14. The polypeptide is Small ribosomal subunit protein uS14A (Bacillus subtilis (strain 168)).